The chain runs to 379 residues: MFGMLRALKTHVEAPIVVATRAVSTNAEKLEEIRERLAKGPNFQDFVQNPENSRSEWEKYEGKLRREKGEEQRLRLPPWLKTTIPVGKNYAKIKAQMRELKLSTVCEEARCPNIGECWGGGEHGTQTATIMLMGDTCTRGCRFCSVKTARRPPPLDVNEPVNTATAIASWGLDYIVLTSVDRDDLPDGGSKHIAETVREIKARNSNIFVECLVPDFRGNLECVETIANSGLDVYAHNIETVEKLTPYVRDRRAHYRQTLQVLTEAKRFNPNLITKSSIMLGLGETDGEIECTLKDLREAGVDCVTLGQYMQPTNKHLKVIEYVTPEKFKHWEERGNALGFLYTASGPLVRSSYKAGEFFITSILENRKKRQNATEIAKE.

Residues Cys-106, Cys-111, Cys-117, Cys-137, Cys-141, Cys-144, and Ser-352 each coordinate [4Fe-4S] cluster. The Radical SAM core domain occupies 122 to 341; the sequence is EHGTQTATIM…EERGNALGFL (220 aa).

The protein belongs to the radical SAM superfamily. Lipoyl synthase family. [4Fe-4S] cluster is required as a cofactor.

Its subcellular location is the mitochondrion. It carries out the reaction [[Fe-S] cluster scaffold protein carrying a second [4Fe-4S](2+) cluster] + N(6)-octanoyl-L-lysyl-[protein] + 2 oxidized [2Fe-2S]-[ferredoxin] + 2 S-adenosyl-L-methionine + 4 H(+) = [[Fe-S] cluster scaffold protein] + N(6)-[(R)-dihydrolipoyl]-L-lysyl-[protein] + 4 Fe(3+) + 2 hydrogen sulfide + 2 5'-deoxyadenosine + 2 L-methionine + 2 reduced [2Fe-2S]-[ferredoxin]. It participates in protein modification; protein lipoylation via endogenous pathway; protein N(6)-(lipoyl)lysine from octanoyl-[acyl-carrier-protein]: step 2/2. Catalyzes the radical-mediated insertion of two sulfur atoms into the C-6 and C-8 positions of the octanoyl moiety bound to the lipoyl domains of lipoate-dependent enzymes, thereby converting the octanoylated domains into lipoylated derivatives. The polypeptide is Lipoyl synthase, mitochondrial (Drosophila erecta (Fruit fly)).